The following is a 537-amino-acid chain: Protoporphyrinogen oxidase 1, chloroplastic (537 aa).

The N-terminal 34 residues, 1–34, are a transit peptide targeting the chloroplast; it reads MELSLLRPTTQSLLPSFSKPNLRLNVYKPLRLRC. The residue at position 35 (serine 35) is an N-acetylserine. FAD contacts are provided by residues 63-68, 90-91, and 112-115; these read GGGISG, EA, and GPNS. The segment covering 256-268 has biased composition (basic and acidic residues); sequence RKNAPKAERDPRL. Residues 256-275 are disordered; that stretch reads RKNAPKAERDPRLPKPQGQT. 511–513 is an FAD binding site; it reads VAL.

The protein belongs to the protoporphyrinogen/coproporphyrinogen oxidase family. Protoporphyrinogen oxidase subfamily. Requires FAD as cofactor. As to expression, expressed at high levels in the leaves and at low levels in the roots and floral buds.

It localises to the plastid. Its subcellular location is the chloroplast. It catalyses the reaction protoporphyrinogen IX + 3 O2 = protoporphyrin IX + 3 H2O2. It participates in porphyrin-containing compound metabolism; protoporphyrin-IX biosynthesis; protoporphyrin-IX from protoporphyrinogen-IX: step 1/1. Its pathway is porphyrin-containing compound metabolism; chlorophyll biosynthesis. With respect to regulation, inhibited by acifluorfen. In terms of biological role, catalyzes the 6-electron oxidation of protoporphyrinogen-IX to form protoporphyrin-IX. This is Protoporphyrinogen oxidase 1, chloroplastic (PPOX1) from Arabidopsis thaliana (Mouse-ear cress).